Here is a 254-residue protein sequence, read N- to C-terminus: 5'-nucleotidase SurE (254 aa).

A divalent metal cation contacts are provided by D8, D9, S40, and N93.

It belongs to the SurE nucleotidase family. It depends on a divalent metal cation as a cofactor.

Its subcellular location is the cytoplasm. It carries out the reaction a ribonucleoside 5'-phosphate + H2O = a ribonucleoside + phosphate. Its function is as follows. Nucleotidase that shows phosphatase activity on nucleoside 5'-monophosphates. The sequence is that of 5'-nucleotidase SurE from Actinobacillus pleuropneumoniae serotype 5b (strain L20).